The sequence spans 879 residues: mRNA-binding protein PUF3 (879 aa).

Thr-83 carries the post-translational modification Phosphothreonine. A phosphoserine mark is found at Ser-207 and Ser-210. 3 disordered regions span residues Glu-222–Glu-256, Pro-344–Gln-417, and Lys-443–Tyr-512. Residues Ser-237–Ser-255 are compositionally biased toward low complexity. Residues Ser-370–Ser-395 show a composition bias toward pro residues. 4 stretches are compositionally biased toward low complexity: residues Gln-398–Gln-417, Asn-449–Asn-463, Thr-472–Asn-491, and His-501–Tyr-512. Residues His-513–Ala-871 form the PUM-HD domain. Pumilio repeat units lie at residues Asp-538 to Asn-573, Glu-574 to Asp-609, Gln-610 to Leu-645, Glu-646 to Ser-681, Ser-682 to Asn-717, Glu-718 to Glu-759, Thr-760 to Ser-795, and Asn-807 to Ile-844.

Belongs to the PUF3 family.

The protein localises to the mitochondrion outer membrane. It localises to the cytoplasm. RNA-binding protein involved in post-transcriptional regulation. Negatively regulates expression of COX17 by binding to the 3'-UTR of COX17 mRNA. Promotes decay of COX17 mRNA by enhancing its rate of deadenylation and subsequent turnover. Predominantly binds to mRNAs encoding mitochondrial proteins and localizes them to the vicinity of mitochondria for translation. Regulates mitochondrial biogenesis, motility and morphology. The chain is mRNA-binding protein PUF3 (PUF3) from Saccharomyces cerevisiae (strain ATCC 204508 / S288c) (Baker's yeast).